The following is a 385-amino-acid chain: Putative ribosomal RNA large subunit methyltransferase MJ1653 (385 aa).

A PUA domain is found at 2-81 (TTKLYVDFGG…LDENYIREKI (80 aa)).

The protein belongs to the methyltransferase superfamily. RlmI family.

It is found in the cytoplasm. This is Putative ribosomal RNA large subunit methyltransferase MJ1653 from Methanocaldococcus jannaschii (strain ATCC 43067 / DSM 2661 / JAL-1 / JCM 10045 / NBRC 100440) (Methanococcus jannaschii).